The sequence spans 71 residues: Keratin-associated protein 6-1 (71 aa).

This sequence belongs to the KRTAP type 6 family. Interacts with hair keratins.

In terms of biological role, in the hair cortex, hair keratin intermediate filaments are embedded in an interfilamentous matrix, consisting of hair keratin-associated proteins (KRTAP), which are essential for the formation of a rigid and resistant hair shaft through their extensive disulfide bond cross-linking with abundant cysteine residues of hair keratins. The matrix proteins include the high-sulfur and high-glycine-tyrosine keratins. This Homo sapiens (Human) protein is Keratin-associated protein 6-1 (KRTAP6-1).